A 331-amino-acid polypeptide reads, in one-letter code: D-alanine--D-alanine ligase (331 aa).

Residues 112–314 (KRIWRSEGLP…YEDLCLRLLA (203 aa)) enclose the ATP-grasp domain. ATP is bound at residue 138–193 (LQTLGAPMIVKPAREGSTIGLSKVHQAQQCASAYLLAARYDPEVLCEQFIAGDELT). D267, E281, and N283 together coordinate Mg(2+).

This sequence belongs to the D-alanine--D-alanine ligase family. It depends on Mg(2+) as a cofactor. Mn(2+) serves as cofactor.

The protein localises to the cytoplasm. The catalysed reaction is 2 D-alanine + ATP = D-alanyl-D-alanine + ADP + phosphate + H(+). The protein operates within cell wall biogenesis; peptidoglycan biosynthesis. In terms of biological role, cell wall formation. The protein is D-alanine--D-alanine ligase of Verminephrobacter eiseniae (strain EF01-2).